A 310-amino-acid polypeptide reads, in one-letter code: tRNA dimethylallyltransferase (310 aa).

11-18 is an ATP binding site; the sequence is GPTGVGKT. 13–18 is a substrate binding site; that stretch reads TGVGKT.

It belongs to the IPP transferase family. In terms of assembly, monomer. Mg(2+) serves as cofactor.

The enzyme catalyses adenosine(37) in tRNA + dimethylallyl diphosphate = N(6)-dimethylallyladenosine(37) in tRNA + diphosphate. Functionally, catalyzes the transfer of a dimethylallyl group onto the adenine at position 37 in tRNAs that read codons beginning with uridine, leading to the formation of N6-(dimethylallyl)adenosine (i(6)A). The polypeptide is tRNA dimethylallyltransferase (Latilactobacillus sakei subsp. sakei (strain 23K) (Lactobacillus sakei subsp. sakei)).